The sequence spans 166 residues: Phospholipase A2 inhibitor clone 02/03/06/07 (166 aa).

A signal peptide spans 1-19 (MRLILLSGLLLLGTFLANG). The C-type lectin domain maps to 46 to 161 (LKHAFLTVHK…CDDNLLVVCE (116 aa)). Disulfide bonds link Cys-83-Cys-160 and Cys-138-Cys-152. Residue Asn-122 is glycosylated (N-linked (GlcNAc...) asparagine).

It belongs to the alpha-type phospholipase A2 inhibitor family. As to quaternary structure, homotrimer; non-covalently linked. Expressed by the liver.

It localises to the secreted. This phospholipase A2 inhibitor binds directly phospholipase A2 in the presence or absence of calcium. The sequence is that of Phospholipase A2 inhibitor clone 02/03/06/07 from Lachesis muta muta (Bushmaster).